A 185-amino-acid chain; its full sequence is Transcription antitermination protein NusB (185 aa).

It belongs to the NusB family.

In terms of biological role, involved in transcription antitermination. Required for transcription of ribosomal RNA (rRNA) genes. Binds specifically to the boxA antiterminator sequence of the ribosomal RNA (rrn) operons. This is Transcription antitermination protein NusB from Rhodospirillum rubrum (strain ATCC 11170 / ATH 1.1.1 / DSM 467 / LMG 4362 / NCIMB 8255 / S1).